Consider the following 333-residue polypeptide: DNA repair and recombination protein RadA (333 aa).

ATP is bound at residue 127 to 134 (GEFGSGKT).

This sequence belongs to the eukaryotic RecA-like protein family.

Functionally, involved in DNA repair and in homologous recombination. Binds and assemble on single-stranded DNA to form a nucleoprotein filament. Hydrolyzes ATP in a ssDNA-dependent manner and promotes DNA strand exchange between homologous DNA molecules. This Pyrobaculum arsenaticum (strain DSM 13514 / JCM 11321 / PZ6) protein is DNA repair and recombination protein RadA.